A 416-amino-acid chain; its full sequence is Calreticulin (416 aa).

An N-terminal signal peptide occupies residues 1-17; it reads MLLSVPLLLGLLGLAAA. Positions 18 to 197 are N-domain; that stretch reads DPAIYFKEQF…NSQVESGSLE (180 aa). Residue Gln-26 participates in Ca(2+) binding. Lys-48 is subject to N6-acetyllysine. Positions 62 and 64 each coordinate Ca(2+). At Lys-64 the chain carries N6-(2-hydroxyisobutyryl)lysine. Cys-105 and Cys-137 form a disulfide bridge. An alpha-D-glucoside contacts are provided by Tyr-109, Lys-111, Tyr-128, and Asp-135. The residue at position 159 (Lys-159) is an N6-acetyllysine. Residues 191-202 form a 1-1 repeat; that stretch reads VESGSLEDDWDF. Residues 191–255 form a 4 X approximate repeats region; that stretch reads VESGSLEDDW…DAKKPEDWDE (65 aa). The segment at 193–277 is disordered; it reads SGSLEDDWDF…NPEYKGEWKP (85 aa). The segment at 198–308 is P-domain; it reads DDWDFLPPKK…YSPDANIYAY (111 aa). Residues 207–251 are compositionally biased toward basic and acidic residues; the sequence is KIKDPDAAKPEDWDERAKIDDPTDSKPEDWDKPEHIPDPDAKKPE. Lys-209 carries the N6-acetyllysine modification. Repeat copies occupy residues 210 to 221, 227 to 238, 244 to 255, 259 to 269, 273 to 283, and 287 to 297. Residues 237-270 are interaction with PPIB; the sequence is DKPEHIPDPDAKKPEDWDEEMDGEWEPPVIQNPE. Over residues 252–261 the composition is skewed to acidic residues; it reads DWDEEMDGEW. A 3 X approximate repeats region spans residues 259–297; the sequence is GEWEPPVIQNPEYKGEWKPRQIDNPDYKGTWIHPEIDNP. The segment at 309 to 416 is C-domain; it reads DSFAVLGLDL…DATGQAKDEL (108 aa). Asp-317 is a binding site for an alpha-D-glucoside. Asp-328 provides a ligand contact to Ca(2+). Positions 350 to 416 are disordered; sequence TKAAEKQMKD…DATGQAKDEL (67 aa). Basic and acidic residues predominate over residues 352-379; sequence AAEKQMKDKQDEEQRLKEEEEDKKRKEE. Positions 380 to 408 are enriched in acidic residues; sequence EEAEDKEDEDDRDEDEDEEDEKEEDEEDA. The Prevents secretion from ER motif lies at 413-416; that stretch reads KDEL.

Belongs to the calreticulin family. In terms of assembly, monomer. Component of an EIF2 complex at least composed of CELF1/CUGBP1, CALR, CALR3, EIF2S1, EIF2S2, HSP90B1 and HSPA5. Interacts with GABARAP, NR3C1 and TRIM21. Interacts with PPIB and SPACA9. Interacts (via P-domain) with PDIA5. Interacts with PDIA3/ERp57. Interacts with CLCC1. In terms of tissue distribution, predentin and odontoblast.

The protein localises to the endoplasmic reticulum lumen. It is found in the cytoplasm. It localises to the cytosol. The protein resides in the secreted. Its subcellular location is the extracellular space. The protein localises to the extracellular matrix. It is found in the cell surface. It localises to the sarcoplasmic reticulum lumen. The protein resides in the cytoplasmic vesicle. Its subcellular location is the secretory vesicle. The protein localises to the cortical granule. It is found in the cytolytic granule. In terms of biological role, calcium-binding chaperone that promotes folding, oligomeric assembly and quality control in the endoplasmic reticulum (ER) via the calreticulin/calnexin cycle. This lectin interacts transiently with almost all of the monoglucosylated glycoproteins that are synthesized in the ER. Interacts with the DNA-binding domain of NR3C1 and mediates its nuclear export. Involved in maternal gene expression regulation. May participate in oocyte maturation via the regulation of calcium homeostasis. Present in the cortical granules of non-activated oocytes, is exocytosed during the cortical reaction in response to oocyte activation and might participate in the block to polyspermy. The sequence is that of Calreticulin (Calr) from Rattus norvegicus (Rat).